The following is a 130-amino-acid chain: Small ribosomal subunit protein uS11 (130 aa).

This sequence belongs to the universal ribosomal protein uS11 family. Part of the 30S ribosomal subunit. Interacts with proteins S7 and S18. Binds to IF-3.

In terms of biological role, located on the platform of the 30S subunit, it bridges several disparate RNA helices of the 16S rRNA. Forms part of the Shine-Dalgarno cleft in the 70S ribosome. This Kosmotoga olearia (strain ATCC BAA-1733 / DSM 21960 / TBF 19.5.1) protein is Small ribosomal subunit protein uS11.